The chain runs to 197 residues: Dephospho-CoA kinase (197 aa).

Residues 4–197 enclose the DPCK domain; the sequence is RLGLTGSIGM…RQIRAGNIHA (194 aa). 12-17 serves as a coordination point for ATP; sequence GMGKST.

It belongs to the CoaE family.

It is found in the cytoplasm. The enzyme catalyses 3'-dephospho-CoA + ATP = ADP + CoA + H(+). It participates in cofactor biosynthesis; coenzyme A biosynthesis; CoA from (R)-pantothenate: step 5/5. Catalyzes the phosphorylation of the 3'-hydroxyl group of dephosphocoenzyme A to form coenzyme A. This chain is Dephospho-CoA kinase, found in Ruegeria pomeroyi (strain ATCC 700808 / DSM 15171 / DSS-3) (Silicibacter pomeroyi).